A 528-amino-acid polypeptide reads, in one-letter code: GMP synthase [glutamine-hydrolyzing] (528 aa).

Residues 3–199 enclose the Glutamine amidotransferase type-1 domain; sequence KVAIIDFGSQ…FLDIAGCQKD (197 aa). Cys83 (nucleophile) is an active-site residue. Active-site residues include His174 and Glu176. In terms of domain architecture, GMPS ATP-PPase spans 200-394; sequence WTVTSFIDDQ…LGISTEILMR (195 aa). 227–233 serves as a coordination point for ATP; sequence SGGVDSS.

In terms of assembly, homodimer.

It catalyses the reaction XMP + L-glutamine + ATP + H2O = GMP + L-glutamate + AMP + diphosphate + 2 H(+). It functions in the pathway purine metabolism; GMP biosynthesis; GMP from XMP (L-Gln route): step 1/1. Catalyzes the synthesis of GMP from XMP. The sequence is that of GMP synthase [glutamine-hydrolyzing] from Ehrlichia ruminantium (strain Welgevonden).